The sequence spans 285 residues: Energy-coupling factor transporter ATP-binding protein EcfA1 (285 aa).

The ABC transporter domain maps to 9–246 (VTVEHLSFTY…VSLIKNAGLD (238 aa)). Residue 43–50 (GHNGSGKS) coordinates ATP.

Belongs to the ABC transporter superfamily. Energy-coupling factor EcfA family. Forms a stable energy-coupling factor (ECF) transporter complex composed of 2 membrane-embedded substrate-binding proteins (S component), 2 ATP-binding proteins (A component) and 2 transmembrane proteins (T component).

The protein localises to the cell membrane. Functionally, ATP-binding (A) component of a common energy-coupling factor (ECF) ABC-transporter complex. Unlike classic ABC transporters this ECF transporter provides the energy necessary to transport a number of different substrates. The chain is Energy-coupling factor transporter ATP-binding protein EcfA1 from Lactobacillus gasseri (strain ATCC 33323 / DSM 20243 / BCRC 14619 / CIP 102991 / JCM 1131 / KCTC 3163 / NCIMB 11718 / NCTC 13722 / AM63).